Consider the following 65-residue polypeptide: MKFHLFFFILLFGATILTAKKSYPEYGSLDLRKECKMRRGHCKLQCSEKELRISFCIRPGTHCCM.

The signal sequence occupies residues 1 to 19; that stretch reads MKFHLFFFILLFGATILTA. Intrachain disulfides connect Cys35–Cys63, Cys42–Cys56, and Cys46–Cys64.

This sequence belongs to the beta-defensin family. In terms of tissue distribution, isoform 2 is epididymis-specific and expressed mainly in the proximal caput.

The protein resides in the secreted. Functionally, has bactericidal activity. Its function is as follows. Isoform 2 may play a role in the antimicrobial protection of sperm and urogenital tract epithelia. In Mus musculus (Mouse), this protein is Beta-defensin 41.